The following is a 374-amino-acid chain: Carnitine monooxygenase oxygenase subunit (374 aa).

Residues 47-155 (WICVAHSSEL…LEEYAGFVFI (109 aa)) enclose the Rieske domain. Positions 89, 91, 109, and 112 each coordinate [2Fe-2S] cluster. Positions 211, 216, and 325 each coordinate Fe cation.

This sequence belongs to the bacterial ring-hydroxylating dioxygenase alpha subunit family. CntA subfamily. Composed of an oxygenase subunit and a reductase subunit. It depends on [2Fe-2S] cluster as a cofactor. The cofactor is Fe cation.

It carries out the reaction (R)-carnitine + NADH + O2 + H(+) = (3R)-3-hydroxy-4-oxobutanoate + trimethylamine + NAD(+) + H2O. It catalyses the reaction (R)-carnitine + NADPH + O2 + H(+) = (3R)-3-hydroxy-4-oxobutanoate + trimethylamine + NADP(+) + H2O. It participates in amine and polyamine metabolism; carnitine metabolism. In terms of biological role, converts carnitine to trimethylamine and malic semialdehyde. This chain is Carnitine monooxygenase oxygenase subunit (yeaW), found in Escherichia coli O157:H7.